The chain runs to 250 residues: UPF0494 membrane protein PB2B2.07c (250 aa).

A run of 3 helical transmembrane segments spans residues Trp98–Val118, Ile144–Leu164, and Met179–Ile199.

This sequence belongs to the UPF0494 family.

It is found in the cytoplasm. The protein resides in the endoplasmic reticulum. The protein localises to the golgi apparatus. It localises to the membrane. The chain is UPF0494 membrane protein PB2B2.07c from Schizosaccharomyces pombe (strain 972 / ATCC 24843) (Fission yeast).